The chain runs to 156 residues: 3-dehydroquinate dehydratase (156 aa).

The active-site Proton acceptor is the Tyr-22. Substrate is bound by residues Asn-73, His-79, and Asp-86. The active-site Proton donor is His-99. Substrate is bound by residues 100-101 and Arg-110; that span reads LS.

It belongs to the type-II 3-dehydroquinase family. As to quaternary structure, homododecamer.

It catalyses the reaction 3-dehydroquinate = 3-dehydroshikimate + H2O. Its pathway is metabolic intermediate biosynthesis; chorismate biosynthesis; chorismate from D-erythrose 4-phosphate and phosphoenolpyruvate: step 3/7. Functionally, catalyzes a trans-dehydration via an enolate intermediate. The protein is 3-dehydroquinate dehydratase of Nitratiruptor sp. (strain SB155-2).